A 775-amino-acid chain; its full sequence is 5-methyltetrahydropteroyltriglutamate--homocysteine methyltransferase (775 aa).

5-methyltetrahydropteroyltri-L-glutamate-binding positions include 15-18 (RELK) and Lys118. L-homocysteine is bound by residues 448–450 (IGS) and Glu501. Residues 448-450 (IGS) and Glu501 contribute to the L-methionine site. Residues 532 to 533 (RC) and Trp578 each bind 5-methyltetrahydropteroyltri-L-glutamate. Residue Asp616 coordinates L-homocysteine. Position 616 (Asp616) interacts with L-methionine. Glu622 lines the 5-methyltetrahydropteroyltri-L-glutamate pocket. Zn(2+) is bound by residues His658, Cys660, and Glu682. His711 functions as the Proton donor in the catalytic mechanism. A Zn(2+)-binding site is contributed by Cys743.

The protein belongs to the vitamin-B12 independent methionine synthase family. Requires Zn(2+) as cofactor.

It carries out the reaction 5-methyltetrahydropteroyltri-L-glutamate + L-homocysteine = tetrahydropteroyltri-L-glutamate + L-methionine. Its pathway is amino-acid biosynthesis; L-methionine biosynthesis via de novo pathway; L-methionine from L-homocysteine (MetE route): step 1/1. Functionally, catalyzes the transfer of a methyl group from 5-methyltetrahydrofolate to homocysteine resulting in methionine formation. In Cytophaga hutchinsonii (strain ATCC 33406 / DSM 1761 / CIP 103989 / NBRC 15051 / NCIMB 9469 / D465), this protein is 5-methyltetrahydropteroyltriglutamate--homocysteine methyltransferase.